Consider the following 115-residue polypeptide: Na(+)/H(+) antiporter subunit C1 (115 aa).

Helical transmembrane passes span 1-21, 28-48, and 72-92; these read MEII…YLVL, IIMG…TMGG, and LILT…VLAF.

This sequence belongs to the CPA3 antiporters (TC 2.A.63) subunit C family. In terms of assembly, may form a heterooligomeric complex that consists of seven subunits: mnhA1, mnhB1, mnhC1, mnhD1, mnhE1, mnhF1 and mnhG1.

Its subcellular location is the cell membrane. Functionally, mnh complex is a Na(+)/H(+) antiporter involved in Na(+) excretion. The sequence is that of Na(+)/H(+) antiporter subunit C1 (mnhC1) from Staphylococcus epidermidis (strain ATCC 35984 / DSM 28319 / BCRC 17069 / CCUG 31568 / BM 3577 / RP62A).